A 582-amino-acid chain; its full sequence is MKSIILFVLSLLLILEKQAAVMGQKGGSKGQLSSGSSRFPHRQRSQHYSGQKDKQHTESKGSSSIQHTYHVDANDHDQTQKSQQYDLNAQHKTTKSEQHLGRSQRLLNYKQKGRDHVKPKRHFRLIVIHRKGGQVHHGTQNPSQNQGNSPSGKGISSQYSNTEERLRVCGLSKEQASASGAQKGRTQGGSQSSYVLQTEELVANKQQRETQNSHRNKGHYQNVVEVREGHSSKLQTSLHPAHQHRLQHGSKDIFTTQDELLVYNKNQHQTKNLNQDQEHGRKAHKVSYQSSSTEERQFNHGEKSVQKDVPKGSISIQTEEKIYGKSQNQVSIPSQDQEHGHKENKISYQSSSTEERRLNCGEKDIQKGVSKGGISIQTEEQIHGEFQNQVTISNQDQEHGHKENKISYQSSSTEERRLNGGEKDIQKSVSKGSISIQTEEKIHGKSQNQVTIPSQDQEHGHKENKISYQSSSTEERQLNYGGKSIQKDVSQSSLSFQTEKLVEGKSQIQTPNPNQDQWSGLNAKGNSGKSADREQDLLSHEQESRYQQKSSGAHNTVNIEHEVAYDDLLTQQYNEDRNPIST.

An N-terminal signal peptide occupies residues 1–23; it reads MKSIILFVLSLLLILEKQAAVMG. Disordered regions lie at residues 25-65, 91-157, 171-192, 272-366, and 393-557; these read KGGS…SSSI, HKTT…GISS, LSKE…GSQS, NLNQ…KDIQ, and SNQD…HNTV. Basic and acidic residues predominate over residues 50–59; that stretch reads GQKDKQHTES. A compositionally biased stretch (basic residues) spans 111-134; sequence QKGRDHVKPKRHFRLIVIHRKGGQ. Composition is skewed to polar residues over residues 137-157 and 174-192; these read HGTQ…GISS and EQAS…GSQS. Over residues 293–310 the composition is skewed to basic and acidic residues; sequence TEERQFNHGEKSVQKDVP. Residues 325–335 show a composition bias toward polar residues; the sequence is KSQNQVSIPSQ. Composition is skewed to basic and acidic residues over residues 336–345, 353–366, 396–405, and 413–426; these read DQEHGHKENK and TEER…KDIQ. 2 stretches are compositionally biased toward polar residues: residues 427-437 and 445-455; these read KSVSKGSISIQ and KSQNQVTIPSQ. Residues 456–465 show a composition bias toward basic and acidic residues; sequence DQEHGHKENK. Composition is skewed to polar residues over residues 487–498 and 506–529; these read KDVSQSSLSFQT and SQIQ…NSGK. Over residues 530 to 546 the composition is skewed to basic and acidic residues; it reads SADREQDLLSHEQESRY. The span at 547 to 557 shows a compositional bias: polar residues; sequence QQKSSGAHNTV.

This sequence belongs to the semenogelin family. Interacts with SERPINA5.

It localises to the secreted. Its function is as follows. Participates in the formation of a gel matrix (sperm coagulum) entrapping the accessory gland secretions and ejaculated spermatozoa. The chain is Semenogelin-2 (SEMG2) from Colobus guereza (Mantled guereza).